A 538-amino-acid polypeptide reads, in one-letter code: Growth factor receptor-bound protein 14 (538 aa).

Positions 1–20 (MTTSLQDGQSAAGRAGAQDS) are disordered. The residue at position 2 (threonine 2) is an N-acetylthreonine. Residues 104 to 190 (KKQVIKVYSE…NKLYLRKNYA (87 aa)) enclose the Ras-associating domain. A PH domain is found at 232–340 (YPEIHGFLHA…WVTAIRLLKD (109 aa)). A phosphoserine mark is found at serine 370 and serine 373. The region spanning 437–533 (WFHHRISRDE…VLPCKLKHYC (97 aa)) is the SH2 domain.

It belongs to the GRB7/10/14 family. In terms of assembly, interacts with the cytoplasmic domain of the autophosphorylated insulin receptor, through the SH2 domain. Interacts with GRB14 (via BPS domain); this interaction protects the tyrosines in the activation loop on INSR from dephosphorylation. Binds to the ankyrin repeat region of TNKS2 via its N-terminus. Interacts with activated NRAS. Interacts (via SH2 domain) with TEK/TIE2 (tyrosine phosphorylated). Post-translationally, phosphorylated on serine residues. Phosphorylated on tyrosine residues by TEK/TIE2.

It localises to the cytoplasm. It is found in the endosome membrane. Functionally, adapter protein which modulates coupling of cell surface receptor kinases with specific signaling pathways. Binds to, and suppresses signals from, the activated insulin receptor (INSR). Potent inhibitor of insulin-stimulated MAPK3 phosphorylation. Plays a critical role regulating PDPK1 membrane translocation in response to insulin stimulation and serves as an adapter protein to recruit PDPK1 to activated insulin receptor, thus promoting PKB/AKT1 phosphorylation and transduction of the insulin signal. This Mus musculus (Mouse) protein is Growth factor receptor-bound protein 14 (Grb14).